Reading from the N-terminus, the 686-residue chain is MATDNPRAVDDQETHPKDRLNRVVFYVSALIILIFSLTTILFNDFANRALNQVLDWVSSTFSWYYLLAATLYMVFVIFIACSRYGNIKLGPKHSKPEFSLLSWSAMLFSAGIGIDLMFFSVAEPLSHYMHPPVGEGQTYEAARQGMVWTLFHYGLTGWCMYALIGMALGYFSYRYNLPLTIRSALYPIFGKKINGPIGHSVDTAAVIGTIFGIATTCGIGVVQLNYGLHVLFDLPENLWVQTALILVAVIITIISVTSGVNKGLRILSEVNIYVSVGLMLFILFLGNTEFLLNALVQNVGDYLSRFPSLALESFAFDQPKEWMNSWTLFFWAWWVAWSPFVGLFLARISRGRTIREFVSGTLIIPLLFTLTWLSIFGNSALHNVIFDGNIALAETVLSNPAHGFYDLLAQYPWFPFIAGVATITGLLFYVTSADSGALVLGNFTTQFTNIDHDAPRWLSVFWAVAIGLLTLAMLMTNGITALQNATIIMGLPFSFVMFLVMAGLYKSLRLEDYRQASASLNAAPVVGNVDILNWKKRLTRVMHHPGTFETKRMLNEICRPAVHAVAEELQKRAVQVDVLEVPLEEDEELYHLDITIHLEEEQNFIYQIWPVRYIAPNFSERGKRGKQFYYRLETYLYEGSQGNDLVGYTKEQVINDILDRYERHMTFLHINRISPGNRPLFPDPKA.

The Cytoplasmic portion of the chain corresponds to 1 to 22 (MATDNPRAVDDQETHPKDRLNR). The helical transmembrane segment at 23 to 43 (VVFYVSALIILIFSLTTILFN) threads the bilayer. The Periplasmic portion of the chain corresponds to 44–60 (DFANRALNQVLDWVSST). Residues 61–81 (FSWYYLLAATLYMVFVIFIAC) traverse the membrane as a helical segment. The Cytoplasmic segment spans residues 82-100 (SRYGNIKLGPKHSKPEFSL). A helical transmembrane segment spans residues 101–121 (LSWSAMLFSAGIGIDLMFFSV). Residues 122–150 (AEPLSHYMHPPVGEGQTYEAARQGMVWTL) are Periplasmic-facing. The helical transmembrane segment at 151–171 (FHYGLTGWCMYALIGMALGYF) threads the bilayer. Residues 172-203 (SYRYNLPLTIRSALYPIFGKKINGPIGHSVDT) lie on the Cytoplasmic side of the membrane. The helical transmembrane segment at 204–224 (AAVIGTIFGIATTCGIGVVQL) threads the bilayer. Residues 225 to 237 (NYGLHVLFDLPEN) lie on the Periplasmic side of the membrane. Residues 238–258 (LWVQTALILVAVIITIISVTS) form a helical membrane-spanning segment. Topologically, residues 259–265 (GVNKGLR) are cytoplasmic. The chain crosses the membrane as a helical span at residues 266–286 (ILSEVNIYVSVGLMLFILFLG). At 287–325 (NTEFLLNALVQNVGDYLSRFPSLALESFAFDQPKEWMNS) the chain is on the periplasmic side. The helical transmembrane segment at 326 to 346 (WTLFFWAWWVAWSPFVGLFLA) threads the bilayer. At 347 to 356 (RISRGRTIRE) the chain is on the cytoplasmic side. A helical transmembrane segment spans residues 357 to 377 (FVSGTLIIPLLFTLTWLSIFG). At 378–412 (NSALHNVIFDGNIALAETVLSNPAHGFYDLLAQYP) the chain is on the periplasmic side. The helical transmembrane segment at 413 to 433 (WFPFIAGVATITGLLFYVTSA) threads the bilayer. The Cytoplasmic portion of the chain corresponds to 434-459 (DSGALVLGNFTTQFTNIDHDAPRWLS). A helical transmembrane segment spans residues 460-480 (VFWAVAIGLLTLAMLMTNGIT). Residues 481–484 (ALQN) are Periplasmic-facing. Residues 485 to 505 (ATIIMGLPFSFVMFLVMAGLY) form a helical membrane-spanning segment. Over 506–686 (KSLRLEDYRQ…NRPLFPDPKA (181 aa)) the chain is Cytoplasmic.

This sequence belongs to the BCCT transporter (TC 2.A.15) family.

It localises to the cell inner membrane. Uptake of choline in the presence of high salinity. May primarily serve for osmoprotection. The polypeptide is Osmo-dependent choline transporter BetT2 (Acinetobacter baylyi (strain ATCC 33305 / BD413 / ADP1)).